The primary structure comprises 71 residues: uncharacterized protein (71 aa).

The helical transmembrane segment at 24-44 (FGGGGLSTAIYSIFAFFSIPL) threads the bilayer.

Its subcellular location is the membrane. This is an uncharacterized protein from Schizosaccharomyces pombe (strain 972 / ATCC 24843) (Fission yeast).